The chain runs to 378 residues: Ret finger protein-like 2 (378 aa).

The RING-type; degenerate zinc-finger motif lies at 101–143 (CPVCSDYLEKPMSLECGCAVCLKCINSLQKEPHGEDLLCCCSS). Positions 168–362 (EPKLKKILQM…DQGVLSICPL (195 aa)) constitute a B30.2/SPRY domain.

In terms of tissue distribution, seems to be expressed in prostate and less abundantly in adult brain, fetal liver, and fetal kidney.

The protein is Ret finger protein-like 2 (RFPL2) of Homo sapiens (Human).